A 239-amino-acid chain; its full sequence is Uridylate kinase (239 aa).

10-13 (KLSG) is an ATP binding site. Residue glycine 52 coordinates UMP. The ATP site is built by glycine 53 and arginine 57. UMP is bound by residues aspartate 72 and 133 to 140 (TGNPFFTT). ATP-binding residues include threonine 160, tyrosine 166, and aspartate 169.

The protein belongs to the UMP kinase family. As to quaternary structure, homohexamer.

The protein localises to the cytoplasm. It catalyses the reaction UMP + ATP = UDP + ADP. It functions in the pathway pyrimidine metabolism; CTP biosynthesis via de novo pathway; UDP from UMP (UMPK route): step 1/1. Its activity is regulated as follows. Inhibited by UTP. Its function is as follows. Catalyzes the reversible phosphorylation of UMP to UDP. In Porphyromonas gingivalis (strain ATCC BAA-308 / W83), this protein is Uridylate kinase.